Here is a 313-residue protein sequence, read N- to C-terminus: Curved DNA-binding protein (313 aa).

One can recognise a J domain in the interval Asp5 to Gly69. The interval Gly71–Val93 is disordered.

It is found in the cytoplasm. Its subcellular location is the nucleoid. Functionally, DNA-binding protein that preferentially recognizes a curved DNA sequence. It is probably a functional analog of DnaJ; displays overlapping activities with DnaJ, but functions under different conditions, probably acting as a molecular chaperone in an adaptive response to environmental stresses other than heat shock. Lacks autonomous chaperone activity; binds native substrates and targets them for recognition by DnaK. Its activity is inhibited by the binding of CbpM. The sequence is that of Curved DNA-binding protein from Coxiella burnetii (strain Dugway 5J108-111).